Reading from the N-terminus, the 321-residue chain is Endochitinase 1 (321 aa).

The N-terminal stretch at 1 to 21 (MSFRALSVFSLFLSYLILGSA) is a signal peptide. Positions 22-64 (EQCGRQAGGALCPGGLCCSQFGWCGNTDDYCKKENGCQSQCSG) constitute a Chitin-binding type-1 domain. Cystine bridges form between cysteine 24/cysteine 39, cysteine 33/cysteine 45, cysteine 38/cysteine 52, cysteine 58/cysteine 62, cysteine 93/cysteine 156, cysteine 167/cysteine 175, and cysteine 274/cysteine 306. Residues 65–98 (SGGDTGGLDSLITRERFDQMLLHRNDGGCPARGF) form a hinge region. A catalytic region spans residues 99-321 (YTYDAFIAAA…YNNGPSVDSM (223 aa)). Glutamate 137 serves as the catalytic Proton donor.

This sequence belongs to the glycosyl hydrolase 19 family. Chitinase class I subfamily.

It localises to the vacuole. It carries out the reaction Random endo-hydrolysis of N-acetyl-beta-D-glucosaminide (1-&gt;4)-beta-linkages in chitin and chitodextrins.. Defense against chitin-containing fungal pathogens. In Theobroma cacao (Cacao), this protein is Endochitinase 1 (CHIA1).